A 612-amino-acid chain; its full sequence is Methionine--tRNA ligase (612 aa).

The 'HIGH' region signature appears at 12-22 (PYANGPRHIGH). 4 residues coordinate Zn(2+): Cys144, Cys147, Cys157, and Cys160. The 'KMSKS' region motif lies at 348 to 352 (KFSSS). Ser351 contributes to the ATP binding site.

This sequence belongs to the class-I aminoacyl-tRNA synthetase family. MetG type 1 subfamily. As to quaternary structure, monomer. Requires Zn(2+) as cofactor.

The protein localises to the cytoplasm. It carries out the reaction tRNA(Met) + L-methionine + ATP = L-methionyl-tRNA(Met) + AMP + diphosphate. Is required not only for elongation of protein synthesis but also for the initiation of all mRNA translation through initiator tRNA(fMet) aminoacylation. This is Methionine--tRNA ligase from Corynebacterium kroppenstedtii (strain DSM 44385 / JCM 11950 / CIP 105744 / CCUG 35717).